The sequence spans 26 residues: Dermaseptin-B5 (26 aa).

The residue at position 26 (V26) is a Valine amide.

It belongs to the frog skin active peptide (FSAP) family. Dermaseptin subfamily. Expressed by the skin glands.

The protein resides in the secreted. Functionally, possesses a potent antimicrobial activity against Gram-positive and Gram-negative bacteria. Probably acts by disturbing membrane functions with its amphipathic structure. This chain is Dermaseptin-B5, found in Phyllomedusa bicolor (Two-colored leaf frog).